Reading from the N-terminus, the 196-residue chain is Holliday junction branch migration complex subunit RuvA (196 aa).

The tract at residues 1-62 is domain I; it reads MYEYINGLIT…ENEMTLYGFI (62 aa). Positions 63–141 are domain II; it reads DENEKYLFNK…DLALSAGMTV (79 aa). Positions 142–146 are flexible linker; that stretch reads ETVPT. Positions 147 to 196 are domain III; the sequence is TDNQALADALAALESLGYSAKDVAKLQTVLANQKDTTDGYIRSALKFLVK.

This sequence belongs to the RuvA family. In terms of assembly, homotetramer. Forms an RuvA(8)-RuvB(12)-Holliday junction (HJ) complex. HJ DNA is sandwiched between 2 RuvA tetramers; dsDNA enters through RuvA and exits via RuvB. An RuvB hexamer assembles on each DNA strand where it exits the tetramer. Each RuvB hexamer is contacted by two RuvA subunits (via domain III) on 2 adjacent RuvB subunits; this complex drives branch migration. In the full resolvosome a probable DNA-RuvA(4)-RuvB(12)-RuvC(2) complex forms which resolves the HJ.

The protein resides in the cytoplasm. The RuvA-RuvB-RuvC complex processes Holliday junction (HJ) DNA during genetic recombination and DNA repair, while the RuvA-RuvB complex plays an important role in the rescue of blocked DNA replication forks via replication fork reversal (RFR). RuvA specifically binds to HJ cruciform DNA, conferring on it an open structure. The RuvB hexamer acts as an ATP-dependent pump, pulling dsDNA into and through the RuvAB complex. HJ branch migration allows RuvC to scan DNA until it finds its consensus sequence, where it cleaves and resolves the cruciform DNA. In Leuconostoc citreum (strain KM20), this protein is Holliday junction branch migration complex subunit RuvA.